A 486-amino-acid polypeptide reads, in one-letter code: Iron-sulfur cluster assembly SufBD family protein ycf24 (486 aa).

The protein belongs to the iron-sulfur cluster assembly SufBD family.

The protein resides in the plastid. The protein localises to the chloroplast. The sequence is that of Iron-sulfur cluster assembly SufBD family protein ycf24 (ycf24) from Trieres chinensis (Marine centric diatom).